Reading from the N-terminus, the 565-residue chain is Proline--tRNA ligase (565 aa).

The protein belongs to the class-II aminoacyl-tRNA synthetase family. ProS type 1 subfamily. Homodimer.

It is found in the cytoplasm. It catalyses the reaction tRNA(Pro) + L-proline + ATP = L-prolyl-tRNA(Pro) + AMP + diphosphate. In terms of biological role, catalyzes the attachment of proline to tRNA(Pro) in a two-step reaction: proline is first activated by ATP to form Pro-AMP and then transferred to the acceptor end of tRNA(Pro). As ProRS can inadvertently accommodate and process non-cognate amino acids such as alanine and cysteine, to avoid such errors it has two additional distinct editing activities against alanine. One activity is designated as 'pretransfer' editing and involves the tRNA(Pro)-independent hydrolysis of activated Ala-AMP. The other activity is designated 'posttransfer' editing and involves deacylation of mischarged Ala-tRNA(Pro). The misacylated Cys-tRNA(Pro) is not edited by ProRS. The polypeptide is Proline--tRNA ligase (Francisella tularensis subsp. novicida (strain U112)).